A 252-amino-acid chain; its full sequence is Flap endonuclease Xni (252 aa).

Aspartate 105 is a binding site for Mg(2+). The 5'-3' exonuclease domain occupies 162–251 (EQYQFLDFIA…EINLKQFRVK (90 aa)). The K(+) site is built by leucine 172, alanine 173, proline 181, isoleucine 183, and isoleucine 186. Positions 185 to 190 (GIGPKS) are interaction with DNA.

It belongs to the Xni family. Mg(2+) serves as cofactor. Requires K(+) as cofactor.

In terms of biological role, has flap endonuclease activity. During DNA replication, flap endonucleases cleave the 5'-overhanging flap structure that is generated by displacement synthesis when DNA polymerase encounters the 5'-end of a downstream Okazaki fragment. The protein is Flap endonuclease Xni of Shewanella denitrificans (strain OS217 / ATCC BAA-1090 / DSM 15013).